Reading from the N-terminus, the 100-residue chain is Urease subunit gamma (100 aa).

This sequence belongs to the urease gamma subunit family. In terms of assembly, heterotrimer of UreA (gamma), UreB (beta) and UreC (alpha) subunits. Three heterotrimers associate to form the active enzyme.

It is found in the cytoplasm. The enzyme catalyses urea + 2 H2O + H(+) = hydrogencarbonate + 2 NH4(+). It functions in the pathway nitrogen metabolism; urea degradation; CO(2) and NH(3) from urea (urease route): step 1/1. This is Urease subunit gamma from Laribacter hongkongensis (strain HLHK9).